The chain runs to 1337 residues: Aldehyde oxidase 4 (1337 aa).

A 2Fe-2S ferredoxin-type domain is found at 4 to 91 (DDLVFAVNGE…GCSITTSDGL (88 aa)). 8 residues coordinate [2Fe-2S] cluster: Cys-43, Cys-48, Cys-51, Cys-73, Cys-113, Cys-116, Cys-155, and Cys-157. The FAD-binding PCMH-type domain occupies 225 to 409 (LDQTRYHWST…LKVHIPRWIA (185 aa)). FAD-binding positions include 259–266 (LVVGNTGT), 342–346 (SIGGN), Asp-358, and Leu-399. Residues Gln-771, Phe-802, and Arg-915 each coordinate Mo-molybdopterin. The active-site Proton acceptor is the Glu-1265.

It belongs to the xanthine dehydrogenase family. As to quaternary structure, aldehyde oxidases (AO) are homodimers and heterodimers of AO subunits. [2Fe-2S] cluster is required as a cofactor. FAD serves as cofactor. Requires Mo-molybdopterin as cofactor. As to expression, transcripts expressed at high levels in developing siliques and at low levels in dry seeds.

The protein localises to the cytoplasm. The catalysed reaction is indole-3-acetaldehyde + O2 + H2O = (indol-3-yl)acetate + H2O2 + H(+). The enzyme catalyses an aldehyde + O2 + H2O = a carboxylate + H2O2 + H(+). It catalyses the reaction benzaldehyde + O2 + H2O = benzoate + H2O2 + H(+). It carries out the reaction hexanal + O2 + H2O = hexanoate + H2O2 + H(+). The catalysed reaction is 1-naphthaldehyde + O2 + H2O = 1-naphthoate + H2O2 + H(+). The enzyme catalyses vanillin + O2 + H2O = vanillate + H2O2 + H(+). It catalyses the reaction malonaldehyde + O2 + H2O = 3-oxopropanoate + H2O2 + H(+). It carries out the reaction citral + O2 + H2O = 3,7-dimethylocta-2,6-dienoate + H2O2 + H(+). The catalysed reaction is acrolein + O2 + H2O = acrylate + H2O2 + H(+). The enzyme catalyses (E)-4-hydroxynon-2-enal + O2 + H2O = (E)-4-hydroxynon-2-enoate + H2O2 + H(+). It catalyses the reaction (E)-cinnamaldehyde + O2 + H2O = (E)-cinnamate + H2O2 + H(+). It carries out the reaction indole-3-carbaldehyde + O2 + H2O = indole-3-carboxylate + H2O2 + H(+). The catalysed reaction is propanal + O2 + H2O = propanoate + H2O2 + H(+). The enzyme catalyses dodecanal + O2 + H2O = dodecanoate + H2O2 + H(+). It catalyses the reaction salicylaldehyde + O2 + H2O = salicylate + H2O2 + H(+). Its activity is regulated as follows. Inhibited by Cu(2+). Aldehyde oxidase with a broad substrate specificity. Involved in the accumulation of benzoic acid (BA) in siliques. Delays and protects siliques from senescence by catalyzing aldehyde detoxification in siliques. Catalyzes the oxidation of an array of aromatic and aliphatic aldehydes, including vanillin and the reactive carbonyl species (RCS) acrolein, 4-hydroxyl-2-nonenal (HNE), and malondialdehyde (MDA). This chain is Aldehyde oxidase 4, found in Arabidopsis thaliana (Mouse-ear cress).